Reading from the N-terminus, the 876-residue chain is DNA mismatch repair protein MutS (876 aa).

Residue 626-633 (GPNMAGKS) coordinates ATP. The segment at 829-856 (FRAAPPPPAPAAPPKASQVEERLRAIQP) is disordered. Pro residues predominate over residues 832 to 841 (APPPPAPAAP).

Belongs to the DNA mismatch repair MutS family.

Functionally, this protein is involved in the repair of mismatches in DNA. It is possible that it carries out the mismatch recognition step. This protein has a weak ATPase activity. In Cereibacter sphaeroides (strain ATCC 17025 / ATH 2.4.3) (Rhodobacter sphaeroides), this protein is DNA mismatch repair protein MutS.